Consider the following 96-residue polypeptide: Co-chaperonin GroES (96 aa).

The protein belongs to the GroES chaperonin family. In terms of assembly, heptamer of 7 subunits arranged in a ring. Interacts with the chaperonin GroEL.

It localises to the cytoplasm. Functionally, together with the chaperonin GroEL, plays an essential role in assisting protein folding. The GroEL-GroES system forms a nano-cage that allows encapsulation of the non-native substrate proteins and provides a physical environment optimized to promote and accelerate protein folding. GroES binds to the apical surface of the GroEL ring, thereby capping the opening of the GroEL channel. The polypeptide is Co-chaperonin GroES (Methylobacillus flagellatus (strain ATCC 51484 / DSM 6875 / VKM B-1610 / KT)).